A 340-amino-acid chain; its full sequence is Putative Ig-like domain-containing protein C1 (340 aa).

The Ig-like domain maps to 207–294 (PTVTVTGIER…SSPRVMVPTI (88 aa)).

The chain is Putative Ig-like domain-containing protein C1 from Sus scrofa (Pig).